The following is a 710-amino-acid chain: Phosphoribosylformylglycinamidine synthase subunit PurL (710 aa).

H36 is a catalytic residue. ATP is bound by residues Y39 and K80. E82 contributes to the Mg(2+) binding site. Substrate contacts are provided by residues 83–86 and R105; that span reads SHNH. Catalysis depends on H84, which acts as the Proton acceptor. D106 lines the Mg(2+) pocket. Q226 is a substrate binding site. Residue D252 participates in Mg(2+) binding. 294–296 serves as a coordination point for substrate; the sequence is ETQ. D470 and G507 together coordinate ATP. S510 lines the substrate pocket.

This sequence belongs to the FGAMS family. In terms of assembly, monomer. Part of the FGAM synthase complex composed of 1 PurL, 1 PurQ and 2 PurS subunits.

The protein resides in the cytoplasm. The catalysed reaction is N(2)-formyl-N(1)-(5-phospho-beta-D-ribosyl)glycinamide + L-glutamine + ATP + H2O = 2-formamido-N(1)-(5-O-phospho-beta-D-ribosyl)acetamidine + L-glutamate + ADP + phosphate + H(+). Its pathway is purine metabolism; IMP biosynthesis via de novo pathway; 5-amino-1-(5-phospho-D-ribosyl)imidazole from N(2)-formyl-N(1)-(5-phospho-D-ribosyl)glycinamide: step 1/2. Its function is as follows. Part of the phosphoribosylformylglycinamidine synthase complex involved in the purines biosynthetic pathway. Catalyzes the ATP-dependent conversion of formylglycinamide ribonucleotide (FGAR) and glutamine to yield formylglycinamidine ribonucleotide (FGAM) and glutamate. The FGAM synthase complex is composed of three subunits. PurQ produces an ammonia molecule by converting glutamine to glutamate. PurL transfers the ammonia molecule to FGAR to form FGAM in an ATP-dependent manner. PurS interacts with PurQ and PurL and is thought to assist in the transfer of the ammonia molecule from PurQ to PurL. This chain is Phosphoribosylformylglycinamidine synthase subunit PurL, found in Sulfolobus acidocaldarius (strain ATCC 33909 / DSM 639 / JCM 8929 / NBRC 15157 / NCIMB 11770).